Reading from the N-terminus, the 274-residue chain is Membrane protein insertase YidC 2 (274 aa).

The signal sequence occupies residues 1 to 20 (MKKKLKLTSLLGLSLLIMTA). Residue C21 is the site of N-palmitoyl cysteine attachment. The S-diacylglycerol cysteine moiety is linked to residue C21. The next 4 helical transmembrane spans lie at 56–76 (ISIG…LLPV), 128–148 (SDSL…FQAL), 167–187 (VDTT…STWL), and 205–225 (GIPV…ALYW).

It belongs to the OXA1/ALB3/YidC family. Type 2 subfamily.

It is found in the cell membrane. Required for the insertion and/or proper folding and/or complex formation of integral membrane proteins into the membrane. Involved in integration of membrane proteins that insert both dependently and independently of the Sec translocase complex, as well as at least some lipoproteins. In Streptococcus pneumoniae serotype 4 (strain ATCC BAA-334 / TIGR4), this protein is Membrane protein insertase YidC 2.